Reading from the N-terminus, the 285-residue chain is (3S)-malyl-CoA thioesterase (285 aa).

The substrate site is built by Arg70 and Glu122. Mg(2+) is bound by residues Glu122 and Asp148.

This sequence belongs to the HpcH/HpaI aldolase family. As to quaternary structure, homodimer or homotrimer. It depends on Mg(2+) as a cofactor.

The catalysed reaction is (S)-malyl-CoA + H2O = (S)-malate + CoA + H(+). Catalyzes the hydrolysis of (3S)-malyl-CoA to (3S)-malate and free CoA. Inactive towards beta-methylmalyl-CoA and other CoA esters. The sequence is that of (3S)-malyl-CoA thioesterase from Cereibacter sphaeroides (strain KD131 / KCTC 12085) (Rhodobacter sphaeroides).